We begin with the raw amino-acid sequence, 49 residues long: uncharacterized protein (49 aa).

The segment at 1–49 (MSNETFEQNEPKPTKVEELQPGDVEAVEDSTPVREITQTDHINKAMLQI) is disordered. Over residues 9–18 (NEPKPTKVEE) the composition is skewed to basic and acidic residues.

This is an uncharacterized protein from Dictyostelium discoideum (Social amoeba).